Reading from the N-terminus, the 451-residue chain is Hexokinase (451 aa).

Positions 6 to 445 (QQLFEKVVEI…SGKGAAAIAA (440 aa)) constitute a Hexokinase domain. The tract at residues 63–195 (NGTETGNFLA…ELNVKCVAVV (133 aa)) is hexokinase small subdomain. Position 74-79 (74-79 (DLGGTN)) interacts with ATP. Substrate-binding positions include S144, 161–162 (TK), 196–197 (ND), 222–223 (TN), E249, and E283. Positions 196-434 (NDTVGTLASC…TRFCLRLSED (239 aa)) are hexokinase large subdomain. ATP is bound by residues 288–289 (GM), 325–329 (TRYLT), and 401–405 (SLYKF).

It belongs to the hexokinase family. Monomer.

It carries out the reaction a D-hexose + ATP = a D-hexose 6-phosphate + ADP + H(+). The enzyme catalyses D-mannose + ATP = D-mannose 6-phosphate + ADP + H(+). It catalyses the reaction D-fructose + ATP = D-fructose 6-phosphate + ADP + H(+). The catalysed reaction is D-glucose + ATP = D-glucose 6-phosphate + ADP + H(+). The protein operates within carbohydrate metabolism; hexose metabolism. It participates in carbohydrate degradation; glycolysis; D-glyceraldehyde 3-phosphate and glycerone phosphate from D-glucose: step 1/4. Catalyzes the phosphorylation of various hexoses to hexose 6-phosphate. In Schistosoma mansoni (Blood fluke), this protein is Hexokinase.